Reading from the N-terminus, the 210-residue chain is Uridine kinase (210 aa).

13-20 (GGSGSGKT) lines the ATP pocket.

It belongs to the uridine kinase family.

Its subcellular location is the cytoplasm. It carries out the reaction uridine + ATP = UMP + ADP + H(+). The catalysed reaction is cytidine + ATP = CMP + ADP + H(+). The protein operates within pyrimidine metabolism; CTP biosynthesis via salvage pathway; CTP from cytidine: step 1/3. It participates in pyrimidine metabolism; UMP biosynthesis via salvage pathway; UMP from uridine: step 1/1. The chain is Uridine kinase from Oceanobacillus iheyensis (strain DSM 14371 / CIP 107618 / JCM 11309 / KCTC 3954 / HTE831).